Reading from the N-terminus, the 288-residue chain is ATP synthase subunit a (288 aa).

6 helical membrane-spanning segments follow: residues L47–V67, L104–L124, D157–I177, P199–A219, L237–W257, and A258–V278.

The protein belongs to the ATPase A chain family. In terms of assembly, F-type ATPases have 2 components, CF(1) - the catalytic core - and CF(0) - the membrane proton channel. CF(1) has five subunits: alpha(3), beta(3), gamma(1), delta(1), epsilon(1). CF(0) has three main subunits: a(1), b(2) and c(9-12). The alpha and beta chains form an alternating ring which encloses part of the gamma chain. CF(1) is attached to CF(0) by a central stalk formed by the gamma and epsilon chains, while a peripheral stalk is formed by the delta and b chains.

It is found in the cell inner membrane. Key component of the proton channel; it plays a direct role in the translocation of protons across the membrane. This is ATP synthase subunit a from Psychrobacter arcticus (strain DSM 17307 / VKM B-2377 / 273-4).